We begin with the raw amino-acid sequence, 173 residues long: Crossover junction endodeoxyribonuclease RuvC (173 aa).

Catalysis depends on residues aspartate 8, glutamate 67, and aspartate 139. Residues aspartate 8, glutamate 67, and aspartate 139 each coordinate Mg(2+).

The protein belongs to the RuvC family. In terms of assembly, homodimer which binds Holliday junction (HJ) DNA. The HJ becomes 2-fold symmetrical on binding to RuvC with unstacked arms; it has a different conformation from HJ DNA in complex with RuvA. In the full resolvosome a probable DNA-RuvA(4)-RuvB(12)-RuvC(2) complex forms which resolves the HJ. Requires Mg(2+) as cofactor.

It localises to the cytoplasm. It carries out the reaction Endonucleolytic cleavage at a junction such as a reciprocal single-stranded crossover between two homologous DNA duplexes (Holliday junction).. In terms of biological role, the RuvA-RuvB-RuvC complex processes Holliday junction (HJ) DNA during genetic recombination and DNA repair. Endonuclease that resolves HJ intermediates. Cleaves cruciform DNA by making single-stranded nicks across the HJ at symmetrical positions within the homologous arms, yielding a 5'-phosphate and a 3'-hydroxyl group; requires a central core of homology in the junction. The consensus cleavage sequence is 5'-(A/T)TT(C/G)-3'. Cleavage occurs on the 3'-side of the TT dinucleotide at the point of strand exchange. HJ branch migration catalyzed by RuvA-RuvB allows RuvC to scan DNA until it finds its consensus sequence, where it cleaves and resolves the cruciform DNA. In Vibrio vulnificus (strain YJ016), this protein is Crossover junction endodeoxyribonuclease RuvC.